The following is a 338-amino-acid chain: MPIKHAIVHLIEKKPDGTPAVLHARDAELGDSQAIENLLADLNESYNAKNKAWGFFQGESGAYPFSGWLGEYLEGDRDFVGFSREAVEHLQKLMEESNLSTGGHVLFAHYQQGMTDYLAIALLHHSEGVAVNESLEVTPSRHLDLGQLHLAARINISEWRNNKQSKQYISFIKGKGGRKVSDYFRDFIGCQEGVDSPSETRTLLKAFSDFVESEDMAEEQAREKTETLVDYATSQARIGEPMTLDALSELMDDQQPRAFYDYIRNKDYGLSPEIPADKRTLNQFRRFTGRAEGLSISFEAHLLGSRIEYDEERDTLQISSLPTQLRDQLKRRKAQIGE.

This sequence belongs to the YejK family.

The protein resides in the cytoplasm. The protein localises to the nucleoid. The protein is Nucleoid-associated protein PA14_59050 of Pseudomonas aeruginosa (strain UCBPP-PA14).